Reading from the N-terminus, the 431-residue chain is MDETATSSEVTETFVSDPTTRQFEEDGHPPLETRHLNMIHEELEKLNISTDVINKMEVQLDLARADFRETQVQWSEKLKELSKQYSSQIAKARPFYELKIKERSLREESQKAAERFERATSILGIAKQQVSLTQESLSRQTSVLPECLEVLNHHIQRVREVEEERTAAESLHASKAHAMLHLAEKIRAMEKDNRYAIKKSRLYFEKRLEFTKILEAQKATILCLEAEVRQKKNDYTTSLRNLERISERIHEERSTGSLESAVSSDQEDQKSDFKSSESLPGNPPPYAPTAPPPYEDKYIIDKDDDSIVLNMIKTEQEEEGEKRNSRSLGSGVILLAQQLIGNGNSTEKHNITPPRHGEEADISYHTRPVGLSDGSDNSEVSSLASFNIGDDDTVSKMLMSHSELIKDIELATDRVGHILKPNIKSVSNAHE.

The segment covering 1–21 (MDETATSSEVTETFVSDPTTR) has biased composition (polar residues). A disordered region spans residues 1 to 28 (MDETATSSEVTETFVSDPTTRQFEEDGH). Coiled coils occupy residues 149-171 (EVLNHHIQRVREVEEERTAAESL) and 214-247 (LEAQKATILCLEAEVRQKKNDYTTSLRNLERISE). Positions 249–298 (IHEERSTGSLESAVSSDQEDQKSDFKSSESLPGNPPPYAPTAPPPYEDKY) are disordered. The segment covering 255 to 264 (TGSLESAVSS) has biased composition (polar residues). Over residues 281–293 (GNPPPYAPTAPPP) the composition is skewed to pro residues.

It belongs to the SH3BP5 family. In terms of assembly, interacts with rab-11.1. Binds preferentially to the GDP-bound form of rab-11.1.

In terms of biological role, guanine nucleotide exchange factor for Rab GTPase Rab-11.1. May spatially and temporally regulate the distribution of Rab-11.1 to target membranes during embryogenesis. May play a role in cytokinesis, probably by targeting rab-11.1 to the cleavage furrows. The chain is Guanine nucleotide exchange factor rei-2 from Caenorhabditis elegans.